Reading from the N-terminus, the 346-residue chain is S-adenosylmethionine:tRNA ribosyltransferase-isomerase (346 aa).

Belongs to the QueA family. As to quaternary structure, monomer.

Its subcellular location is the cytoplasm. It carries out the reaction 7-aminomethyl-7-carbaguanosine(34) in tRNA + S-adenosyl-L-methionine = epoxyqueuosine(34) in tRNA + adenine + L-methionine + 2 H(+). It participates in tRNA modification; tRNA-queuosine biosynthesis. In terms of biological role, transfers and isomerizes the ribose moiety from AdoMet to the 7-aminomethyl group of 7-deazaguanine (preQ1-tRNA) to give epoxyqueuosine (oQ-tRNA). The polypeptide is S-adenosylmethionine:tRNA ribosyltransferase-isomerase (Borreliella afzelii (strain PKo) (Borrelia afzelii)).